Here is a 328-residue protein sequence, read N- to C-terminus: DNA-directed RNA polymerase subunit alpha (328 aa).

The tract at residues 1–230 (MNKIKITPSV…QSQMEIFTND (230 aa)) is alpha N-terminal domain (alpha-NTD). The interval 243 to 328 (NSEIFYQPLD…ILKKIEQNKS (86 aa)) is alpha C-terminal domain (alpha-CTD).

It belongs to the RNA polymerase alpha chain family. In terms of assembly, homodimer. The RNAP catalytic core consists of 2 alpha, 1 beta, 1 beta' and 1 omega subunit. When a sigma factor is associated with the core the holoenzyme is formed, which can initiate transcription.

It catalyses the reaction RNA(n) + a ribonucleoside 5'-triphosphate = RNA(n+1) + diphosphate. In terms of biological role, DNA-dependent RNA polymerase catalyzes the transcription of DNA into RNA using the four ribonucleoside triphosphates as substrates. The polypeptide is DNA-directed RNA polymerase subunit alpha (Nitratiruptor sp. (strain SB155-2)).